The following is a 413-amino-acid chain: uncharacterized protein (413 aa).

The Response regulatory domain occupies 2 to 129; sequence RILIVDDENT…KTTWKLRLME (128 aa). 4-aspartylphosphate is present on Asp-54.

This is an uncharacterized protein from Sinorhizobium fredii (strain NBRC 101917 / NGR234).